Reading from the N-terminus, the 264-residue chain is 3-dehydroquinate dehydratase (264 aa).

3-dehydroquinate is bound by residues Glu-50–Arg-52 and Arg-86. His-148 acts as the Proton donor/acceptor in catalysis. The Schiff-base intermediate with substrate role is filled by Lys-175. Arg-217, Ser-236, and Gln-240 together coordinate 3-dehydroquinate.

The protein belongs to the type-I 3-dehydroquinase family. In terms of assembly, homodimer.

The enzyme catalyses 3-dehydroquinate = 3-dehydroshikimate + H2O. It functions in the pathway metabolic intermediate biosynthesis; chorismate biosynthesis; chorismate from D-erythrose 4-phosphate and phosphoenolpyruvate: step 3/7. Functionally, involved in the third step of the chorismate pathway, which leads to the biosynthesis of aromatic amino acids. Catalyzes the cis-dehydration of 3-dehydroquinate (DHQ) and introduces the first double bond of the aromatic ring to yield 3-dehydroshikimate. This chain is 3-dehydroquinate dehydratase, found in Albidiferax ferrireducens (strain ATCC BAA-621 / DSM 15236 / T118) (Rhodoferax ferrireducens).